The chain runs to 623 residues: Methionine--tRNA ligase (623 aa).

The short motif at 11-21 (PYANGPRHIGH) is the 'HIGH' region element. Residues cysteine 143, cysteine 146, cysteine 156, and cysteine 159 each contribute to the Zn(2+) site. Residues 347–351 (KFSSS) carry the 'KMSKS' region motif. Residue serine 350 coordinates ATP.

It belongs to the class-I aminoacyl-tRNA synthetase family. MetG type 1 subfamily. As to quaternary structure, monomer. The cofactor is Zn(2+).

The protein localises to the cytoplasm. The catalysed reaction is tRNA(Met) + L-methionine + ATP = L-methionyl-tRNA(Met) + AMP + diphosphate. Its function is as follows. Is required not only for elongation of protein synthesis but also for the initiation of all mRNA translation through initiator tRNA(fMet) aminoacylation. This is Methionine--tRNA ligase from Bifidobacterium animalis subsp. lactis (strain AD011).